Reading from the N-terminus, the 67-residue chain is Large ribosomal subunit protein uL29 (67 aa).

It belongs to the universal ribosomal protein uL29 family.

The polypeptide is Large ribosomal subunit protein uL29 (Zymomonas mobilis subsp. mobilis (strain ATCC 31821 / ZM4 / CP4)).